Consider the following 216-residue polypeptide: Protein Syd (216 aa).

This sequence belongs to the Syd family.

The protein resides in the cell inner membrane. In terms of biological role, interacts with the SecY protein in vivo. May bind preferentially to an uncomplexed state of SecY, thus functioning either as a chelating agent for excess SecY in the cell or as a regulatory factor that negatively controls the translocase function. The protein is Protein Syd of Shewanella baltica (strain OS223).